A 246-amino-acid chain; its full sequence is MRSGVIAQKVGMTRVFTDAGEHVPVTVLKVDQCQVVAHRTVEKNGYVALQVGVGKAKVKNVSKAERGRFAIAKVEPKRKLAEFRVTEDALIPVGAEITADHFIPGQFVDVTGTTTGKGFAGGMKRWNFGGLRATHGVSISHRSIGSTGGRQDPGKTFKNKKMPGHLGVERVTTQNLRVVRTDPERGLILVEGAVPGVAGGWIQIRDAVKRKLPAEAPMPGKFRELADGAAPAVDAAPEAPAVEENA.

Residues 140–162 form a disordered region; that stretch reads SHRSIGSTGGRQDPGKTFKNKKM. Q151 is subject to N5-methylglutamine.

This sequence belongs to the universal ribosomal protein uL3 family. As to quaternary structure, part of the 50S ribosomal subunit. Forms a cluster with proteins L14 and L19. Methylated by PrmB.

One of the primary rRNA binding proteins, it binds directly near the 3'-end of the 23S rRNA, where it nucleates assembly of the 50S subunit. The protein is Large ribosomal subunit protein uL3 of Methylobacterium sp. (strain 4-46).